Here is a 354-residue protein sequence, read N- to C-terminus: Transcription termination factor 3, mitochondrial (354 aa).

A mitochondrion-targeting transit peptide spans 1-89; it reads MFCSALRNIL…SFNLAAYVNN (89 aa).

It belongs to the mTERF family.

It localises to the mitochondrion. Functionally, binds promoter DNA and regulates initiation of transcription. Regulator of mitochondrial ribosome biogenesis and translation that is essential for development. Required for normal mitochondrial transcription and translation. Required for assembly of mitochondrial respiratory complexes and normal mitochondrial function. Maintains 16S rRNA levels and functions in mitochondrial ribosome assembly by regulating the biogenesis of the 39S ribosomal subunit. The sequence is that of Transcription termination factor 3, mitochondrial from Drosophila melanogaster (Fruit fly).